The chain runs to 305 residues: Pseudouridine-5'-phosphate glycosidase (305 aa).

Glutamate 30 functions as the Proton donor in the catalytic mechanism. Substrate is bound by residues lysine 91 and valine 111. Aspartate 143 is a binding site for Mn(2+). Residue 145–147 (SAD) participates in substrate binding. Residue lysine 164 is the Nucleophile of the active site.

It belongs to the pseudouridine-5'-phosphate glycosidase family. In terms of assembly, homotrimer. Requires Mn(2+) as cofactor.

The catalysed reaction is D-ribose 5-phosphate + uracil = psi-UMP + H2O. Its function is as follows. Catalyzes the reversible cleavage of pseudouridine 5'-phosphate (PsiMP) to ribose 5-phosphate and uracil. Functions biologically in the cleavage direction, as part of a pseudouridine degradation pathway. The polypeptide is Pseudouridine-5'-phosphate glycosidase (Mesorhizobium japonicum (strain LMG 29417 / CECT 9101 / MAFF 303099) (Mesorhizobium loti (strain MAFF 303099))).